Consider the following 174-residue polypeptide: Flavodoxin (174 aa).

Positions 4 to 165 constitute a Flavodoxin-like domain; that stretch reads VGLFYGSDTG…RVEKWCKQIY (162 aa).

This sequence belongs to the flavodoxin family. It depends on FMN as a cofactor.

Its function is as follows. Low-potential electron donor to a number of redox enzymes. In Haemophilus influenzae (strain ATCC 51907 / DSM 11121 / KW20 / Rd), this protein is Flavodoxin (fldA).